Reading from the N-terminus, the 152-residue chain is MLMNSVIALTFLTASSNNGGLNIDVQQEEEKRINNDLNQYDTTLFNKDSKEVNDAIAKQKKERQQQIKNDMFQNQASHSTRLNETKKVLFSKSNLEKTSESDKSPYIQNKQEKKIFPYILMSVGAFLTLGFVIFSIHKGRRTKNESARKSNI.

Residues 1–114 (MLMNSVIALT…PYIQNKQEKK (114 aa)) lie on the Cytoplasmic side of the membrane. Residues 115 to 135 (IFPYILMSVGAFLTLGFVIFS) traverse the membrane as a helical segment. Residues 136–152 (IHKGRRTKNESARKSNI) are Extracellular-facing.

It belongs to the EssA family.

The protein localises to the cell membrane. Functionally, component of the ESAT-6 secretion system (Ess). Required for the secretion of EsxA and EsxB. In Staphylococcus aureus (strain Mu50 / ATCC 700699), this protein is ESAT-6 secretion machinery protein EssA.